Consider the following 182-residue polypeptide: Epoxyqueuosine reductase QueH (182 aa).

Positions 10, 11, 85, and 88 each coordinate [4Fe-4S] cluster. The cysteines at positions 165 and 167 are disulfide-linked.

The protein belongs to the QueH family.

The enzyme catalyses epoxyqueuosine(34) in tRNA + AH2 = queuosine(34) in tRNA + A + H2O. It functions in the pathway tRNA modification; tRNA-queuosine biosynthesis. In terms of biological role, catalyzes the conversion of epoxyqueuosine (oQ) to queuosine (Q), which is a hypermodified base found in the wobble positions of tRNA(Asp), tRNA(Asn), tRNA(His) and tRNA(Tyr). The polypeptide is Epoxyqueuosine reductase QueH (Dehalococcoides mccartyi (strain ATCC BAA-2266 / KCTC 15142 / 195) (Dehalococcoides ethenogenes (strain 195))).